A 1671-amino-acid polypeptide reads, in one-letter code: Hybrid signal transduction protein dokA (1671 aa).

Residues 1 to 10 (MSSPHIELHS) are compositionally biased toward basic and acidic residues. Disordered stretches follow at residues 1-27 (MSSP…ELTG), 42-89 (DDLN…DKND), 126-241 (QQQQ…RRSS), 365-451 (YSNN…NNEE), 579-603 (HNHN…SPFI), and 629-651 (SNSS…SSNA). A compositionally biased stretch (polar residues) spans 11–27 (QRTLSPQPSSNNFELTG). Composition is skewed to low complexity over residues 45-83 (NNNN…NNNN) and 126-167 (QQQQ…QQQE). A compositionally biased stretch (acidic residues) spans 168–179 (QEQEQEQEQEQE). Residues 367-449 (NNNNNTNTNN…NNNNNNNNNN (83 aa)) are compositionally biased toward low complexity. Residues 591 to 600 (TTQRASSTDS) are compositionally biased toward polar residues. The 227-residue stretch at 1050 to 1276 (NISHELRTPC…TFWFAIKVSI (227 aa)) folds into the Histidine kinase domain. Positions 1519–1633 (YILVAEDNDI…RLQKTLSDWI (115 aa)) constitute a Response regulatory domain.

In terms of processing, under osmotic stress conditions, this protein undergoes phosphorylation at a serine residue in the kinase core, which is not due to an autophosphorylation of dokA. This is in contrast to the classic two-component paradigm, which predicts only histidine and aspartate phosphorylation.

Its function is as follows. Part of the osmoregulatory pathway which leads to the increase of intracellular cAMP concentration in response to hyperosmotic stress. Thought to negatively regulate the rdeA-regA pathway by acting as a phosphatase towards the HPt protein rdeA. Has probably no histidine kinase activity. This chain is Hybrid signal transduction protein dokA (dokA), found in Dictyostelium discoideum (Social amoeba).